Consider the following 565-residue polypeptide: Oxygen-dependent choline dehydrogenase (565 aa).

6–35 provides a ligand contact to FAD; the sequence is DYIIIGAGSAGNVLATRLTEDADVSVLLLE. H475 functions as the Proton acceptor in the catalytic mechanism. The disordered stretch occupies residues 541-565; sequence RSNAPYFVAGERPVRGQPQRAVSAA.

The protein belongs to the GMC oxidoreductase family. It depends on FAD as a cofactor.

It carries out the reaction choline + A = betaine aldehyde + AH2. The enzyme catalyses betaine aldehyde + NAD(+) + H2O = glycine betaine + NADH + 2 H(+). Its pathway is amine and polyamine biosynthesis; betaine biosynthesis via choline pathway; betaine aldehyde from choline (cytochrome c reductase route): step 1/1. Involved in the biosynthesis of the osmoprotectant glycine betaine. Catalyzes the oxidation of choline to betaine aldehyde and betaine aldehyde to glycine betaine at the same rate. The sequence is that of Oxygen-dependent choline dehydrogenase from Ectopseudomonas mendocina (strain ymp) (Pseudomonas mendocina).